A 374-amino-acid chain; its full sequence is All-trans-retinol dehydrogenase [NAD(+)] ADH7 (374 aa).

An N-acetylmethionine modification is found at methionine 1. Zn(2+)-binding residues include cysteine 47, histidine 68, cysteine 98, cysteine 101, cysteine 104, cysteine 112, and cysteine 174. NAD(+) is bound by residues glycine 199–glycine 204, aspartate 223, lysine 228, valine 292–alanine 294, and arginine 369.

Belongs to the zinc-containing alcohol dehydrogenase family. Class-IV subfamily. Homodimer. It depends on Zn(2+) as a cofactor. In terms of tissue distribution, preferentially expressed in stomach.

It is found in the cytoplasm. It catalyses the reaction a primary alcohol + NAD(+) = an aldehyde + NADH + H(+). The catalysed reaction is 10-hydroxydecanoate + NAD(+) = 10-oxodecanoate + NADH + H(+). The enzyme catalyses all-trans-retinol + NAD(+) = all-trans-retinal + NADH + H(+). It carries out the reaction 9-cis-retinol + NAD(+) = 9-cis-retinal + NADH + H(+). It catalyses the reaction all-trans-3,4-didehydroretinol + NAD(+) = all-trans-3,4-didehydroretinal + NADH + H(+). The catalysed reaction is all-trans-4-hydroxyretinol + NAD(+) = all-trans-4-hydroxyretinal + NADH + H(+). The enzyme catalyses all-trans-4-oxoretinol + NAD(+) = all-trans-4-oxoretinal + NADH + H(+). It carries out the reaction 12-hydroxydodecanoate + NAD(+) = 12-oxododecanoate + NADH + H(+). It catalyses the reaction 16-hydroxyhexadecanoate + NAD(+) = 16-oxohexadecanoate + NADH + H(+). The catalysed reaction is hexan-1-ol + NAD(+) = hexanal + NADH + H(+). The enzyme catalyses (E)-hex-2-en-1-ol + NAD(+) = (E)-hex-2-enal + NADH + H(+). It carries out the reaction (E)-4-hydroxynon-2-en-1-ol + NAD(+) = (E)-4-hydroxynon-2-enal + NADH + H(+). Retinol oxidation is inhibited by the detergent Tween 80. Ethanol inhibits both all-trans-retinol and 9-cis-retinol oxidation. 13-cis-retinol is an effective competitive inhibitor of the 9-cis-retinol oxidation. All-trans-retinoic acid is a powerful inhibitor of all-trans-retinol oxidation. 13-cis-retinoic acid is a powerful inhibitor of all-trans-retinol oxidation. Cimetidine and ranitidine inhibited ethanol oxidation. Catalyzes the NAD-dependent oxidation of all-trans-retinol, alcohol, aldehyde and omega-hydroxy fatty acids and their derivatives. Oxidizes preferentially all trans-retinol, all-trans-4-hydroxyretinol, 9-cis-retinol, 2-hexenol, and long chain omega-hydroxy fatty acids such as juniperic acid. In vitro can also catalyze the NADH-dependent reduction of all-trans-retinal and aldehydes and their derivatives. Reduces preferentially all trans-retinal, all-trans-4-oxoretinal and hexanal. Catalyzes in the oxidative direction with higher efficiency. Therefore may participate in retinoid metabolism, fatty acid omega-oxidation, and elimination of cytotoxic aldehydes produced by lipid peroxidation. In Rattus norvegicus (Rat), this protein is All-trans-retinol dehydrogenase [NAD(+)] ADH7 (Adh7).